Here is a 305-residue protein sequence, read N- to C-terminus: Translation initiation factor eIF2B subunit alpha (305 aa).

Lysine 35 is subject to N6-acetyllysine.

This sequence belongs to the eIF-2B alpha/beta/delta subunits family. As to quaternary structure, component of the translation initiation factor 2B (eIF2B) complex which is a heterodecamer of two sets of five different subunits: alpha, beta, gamma, delta and epsilon. Subunits alpha, beta and delta comprise a regulatory subcomplex and subunits epsilon and gamma comprise a catalytic subcomplex. Within the complex, the hexameric regulatory complex resides at the center, with the two heterodimeric catalytic subcomplexes bound on opposite sides.

It is found in the cytoplasm. The protein localises to the cytosol. With respect to regulation, activated by the chemical integrated stress response (ISR) inhibitor ISRIB which stimulates guanine nucleotide exchange factor activity for both phosphorylated and unphosphorylated eIF2. In terms of biological role, acts as a component of the translation initiation factor 2B (eIF2B) complex, which catalyzes the exchange of GDP for GTP on eukaryotic initiation factor 2 (eIF2) gamma subunit. Its guanine nucleotide exchange factor activity is repressed when bound to eIF2 complex phosphorylated on the alpha subunit, thereby limiting the amount of methionyl-initiator methionine tRNA available to the ribosome and consequently global translation is repressed. In Mus musculus (Mouse), this protein is Translation initiation factor eIF2B subunit alpha (Eif2b1).